Consider the following 910-residue polypeptide: Potassium/sodium hyperpolarization-activated cyclic nucleotide-gated channel 1 (910 aa).

The disordered stretch occupies residues 1–75 (MEGGGKPNSA…PAGSFEDAEG (75 aa)). The Cytoplasmic segment spans residues 1-131 (MEGGGKPNSA…WIIHPYSDFR (131 aa)). The chain crosses the membrane as a helical span at residues 132 to 153 (FYWDLIMLIMMVGNLVIIPVGI). At 154–162 (TFFTEQTTT) the chain is on the extracellular side. The chain crosses the membrane as a helical span at residues 163–183 (PWIIFNVASDTVFLLDLIMNF). Over 184 to 204 (RTGTVNEDSSEIILDPKVIKM) the chain is Cytoplasmic. Residues 205 to 225 (NYLKSWFVVDFISSIPVDYIF) traverse the membrane as a helical segment. Topologically, residues 226–249 (LIVEKGMDSEVYKTARALRIVRFT) are extracellular. Residues 250 to 270 (KILSLLRLLRLSRLIRYIHQW) traverse the membrane as a helical; Voltage-sensor segment. Residues 271–284 (EEIFHMTYDLASAV) lie on the Cytoplasmic side of the membrane. A helical transmembrane segment spans residues 285–307 (VRIFNLIGMMLLLCHWDGCLQFL). The Extracellular portion of the chain corresponds to 308–333 (VPLLQDFPPDCWVSLNEMVNDSWGKQ). N-linked (GlcNAc...) asparagine glycosylation is present at N327. Positions 334–355 (YSYALFKAMSHMLCIGYGAQAP) form an intramembrane region, pore-forming. Positions 347-351 (CIGYG) match the Selectivity filter motif. Residues 356-360 (VSMSD) lie on the Extracellular side of the membrane. The chain crosses the membrane as a helical span at residues 361 to 381 (LWITMLSMIVGATCYAMFVGH). Residues 382-910 (ATALIQSLDS…AEKPRFASNL (529 aa)) are Cytoplasmic-facing. The 3',5'-cyclic AMP site is built by G528, E529, C531, R538, T539, R579, and R582. Disordered stretches follow at residues 634–681 (TALN…QPSA), 771–791 (QQQQ…VHKS), and 865–910 (QMSS…ASNL). The span at 639–680 (TSSTTTPTSRMRTQSPPVYTATSLSHSNLHSPSPSTQTPQPS) shows a compositional bias: low complexity. Polar residues predominate over residues 780 to 791 (GSSTPKNEVHKS). Residues 875–885 (RGVPPAPPPPA) are compositionally biased toward pro residues. Residues 900–910 (DAEKPRFASNL) are compositionally biased toward basic and acidic residues.

The protein belongs to the potassium channel HCN family. In terms of assembly, homotetramer. Heterotetramer with HCN2. The potassium channel is composed of a homo- or heterotetrameric complex of pore-forming subunits. Interacts with KCNE2. Interacts with the SH3 domain of CSK. In terms of processing, N-glycosylated. Predominantly expressed in brain. Highly expressed in apical dendrites of pyramidal neurons in the cortex, in the layer corresponding to the stratum lacunosum-moleculare in the hippocampus and in axons of basket cells in the cerebellum (at protein level). Expressed in a subset of elongated cells in taste buds.

It is found in the cell membrane. The catalysed reaction is Na(+)(in) = Na(+)(out). It carries out the reaction K(+)(in) = K(+)(out). With respect to regulation, activated by cAMP. cAMP binding causes a conformation change that leads to the assembly of an active tetramer and channel opening. Compared to other family members, cAMP has less stimulatory effect on HCN1 because part of the molecules already contain bound cAMP and form homotetramers when cAMP levels are low, this inherent tetramerization in HCN1 results in a weaker response to increased cAMP. In terms of biological role, hyperpolarization-activated ion channel that are permeable to sodium and potassium ions. Exhibits weak selectivity for potassium over sodium ions. Contributes to the native pacemaker currents in heart (If) and in neurons (Ih). Participates in cerebellar mechanisms of motor learning. May mediate responses to sour stimuli. This chain is Potassium/sodium hyperpolarization-activated cyclic nucleotide-gated channel 1 (Hcn1), found in Mus musculus (Mouse).